Reading from the N-terminus, the 408-residue chain is Putative polysaccharide ligase RBE_0399 (408 aa).

The next 10 helical transmembrane spans lie at 5 to 25, 72 to 92, 94 to 114, 130 to 150, 163 to 183, 192 to 212, 230 to 250, 325 to 345, 359 to 377, and 380 to 400; these read FFIF…AATV, MTIK…LFAI, PINS…GFVV, LIFG…SYGF, MLDR…AILI, LILY…ASFL, IFSK…PIIA, ILQI…SLVY, FRAS…GMIS, and VWQI…KLLV.

This sequence belongs to the O-antigen ligase family.

It is found in the membrane. The sequence is that of Putative polysaccharide ligase RBE_0399 (rfaL) from Rickettsia bellii (strain RML369-C).